Reading from the N-terminus, the 544-residue chain is CTP synthase (544 aa).

The amidoligase domain stretch occupies residues 1-265 (MTKFIFVTGG…DNIITEQLQL (265 aa)). Residue Ser13 participates in CTP binding. Residue Ser13 coordinates UTP. ATP-binding positions include 14–19 (SLGKGI) and Asp71. Mg(2+) contacts are provided by Asp71 and Glu139. CTP is bound by residues 146 to 148 (DIE), 186 to 191 (KTKPTQ), and Lys222. UTP is bound by residues 186-191 (KTKPTQ) and Lys222. Residues 290-544 (KIAMVGKYVD…VKAALNNKKA (255 aa)) form the Glutamine amidotransferase type-1 domain. Gly353 contacts L-glutamine. Cys380 serves as the catalytic Nucleophile; for glutamine hydrolysis. L-glutamine contacts are provided by residues 381–384 (LGMQ), Glu404, and Arg471. Active-site residues include His517 and Glu519.

This sequence belongs to the CTP synthase family. As to quaternary structure, homotetramer.

It catalyses the reaction UTP + L-glutamine + ATP + H2O = CTP + L-glutamate + ADP + phosphate + 2 H(+). It carries out the reaction L-glutamine + H2O = L-glutamate + NH4(+). The catalysed reaction is UTP + NH4(+) + ATP = CTP + ADP + phosphate + 2 H(+). Its pathway is pyrimidine metabolism; CTP biosynthesis via de novo pathway; CTP from UDP: step 2/2. Allosterically activated by GTP, when glutamine is the substrate; GTP has no effect on the reaction when ammonia is the substrate. The allosteric effector GTP functions by stabilizing the protein conformation that binds the tetrahedral intermediate(s) formed during glutamine hydrolysis. Inhibited by the product CTP, via allosteric rather than competitive inhibition. Its function is as follows. Catalyzes the ATP-dependent amination of UTP to CTP with either L-glutamine or ammonia as the source of nitrogen. Regulates intracellular CTP levels through interactions with the four ribonucleotide triphosphates. This Neisseria meningitidis serogroup A / serotype 4A (strain DSM 15465 / Z2491) protein is CTP synthase.